We begin with the raw amino-acid sequence, 627 residues long: DNA mismatch repair protein MutL (627 aa).

The segment covering D354–E364 has biased composition (basic and acidic residues). The tract at residues D354–M374 is disordered.

This sequence belongs to the DNA mismatch repair MutL/HexB family.

Its function is as follows. This protein is involved in the repair of mismatches in DNA. It is required for dam-dependent methyl-directed DNA mismatch repair. May act as a 'molecular matchmaker', a protein that promotes the formation of a stable complex between two or more DNA-binding proteins in an ATP-dependent manner without itself being part of a final effector complex. Overexpression of mutSL partially suppresses the high spontaneous mutation frequency of a ytkD/mutM/mutY triple disruption which lacks the system required to prevent damage by oxidized guanine (8-oxo-dGTP). This suggests that MutSL also functions to repair mismatches due to oxidative stress in both growing and stationary phase cells. The polypeptide is DNA mismatch repair protein MutL (Bacillus subtilis (strain 168)).